Reading from the N-terminus, the 134-residue chain is Transmembrane protein 100 (134 aa).

Ser15 carries the post-translational modification Phosphoserine. Helical transmembrane passes span 56 to 76 and 84 to 104; these read CVIP…AVAY and IISI…ASSA. Phosphoserine is present on Ser121.

In terms of assembly, interacts (via C-terminus) with TRPA1 and TRPV1. Interacts with TASOR.

It is found in the cell membrane. The protein localises to the membrane. Its subcellular location is the perikaryon. It localises to the cytoplasm. The protein resides in the perinuclear region. It is found in the endoplasmic reticulum. In terms of biological role, plays a role during embryonic arterial endothelium differentiation and vascular morphogenesis through the ACVRL1 receptor-dependent signaling pathway upon stimulation by bone morphogenetic proteins, such as GDF2/BMP9 and BMP10. Involved in the regulation of nociception, acting as a modulator of the interaction between TRPA1 and TRPV1, two molecular sensors and mediators of pain signals in dorsal root ganglia (DRG) neurons. Mechanistically, it weakens their interaction, thereby releasing the inhibition of TRPA1 by TRPV1 and increasing the single-channel open probability of the TRPA1-TRPV1 complex. The sequence is that of Transmembrane protein 100 (TMEM100) from Bos taurus (Bovine).